The primary structure comprises 271 residues: Formamidopyrimidine-DNA glycosylase (271 aa).

The active-site Schiff-base intermediate with DNA is the Pro-2. Catalysis depends on Glu-3, which acts as the Proton donor. Catalysis depends on Lys-58, which acts as the Proton donor; for beta-elimination activity. Positions 92, 111, and 152 each coordinate DNA. The FPG-type zinc finger occupies 237-271 (YVYGKVQKPCRICNNIITLIRQNGRSTYFCNACQN). Residue Arg-261 is the Proton donor; for delta-elimination activity of the active site.

It belongs to the FPG family. Monomer. Requires Zn(2+) as cofactor.

The catalysed reaction is Hydrolysis of DNA containing ring-opened 7-methylguanine residues, releasing 2,6-diamino-4-hydroxy-5-(N-methyl)formamidopyrimidine.. It catalyses the reaction 2'-deoxyribonucleotide-(2'-deoxyribose 5'-phosphate)-2'-deoxyribonucleotide-DNA = a 3'-end 2'-deoxyribonucleotide-(2,3-dehydro-2,3-deoxyribose 5'-phosphate)-DNA + a 5'-end 5'-phospho-2'-deoxyribonucleoside-DNA + H(+). Involved in base excision repair of DNA damaged by oxidation or by mutagenic agents. Acts as a DNA glycosylase that recognizes and removes damaged bases. Has a preference for oxidized purines, such as 7,8-dihydro-8-oxoguanine (8-oxoG). Has AP (apurinic/apyrimidinic) lyase activity and introduces nicks in the DNA strand. Cleaves the DNA backbone by beta-delta elimination to generate a single-strand break at the site of the removed base with both 3'- and 5'-phosphates. In Wolbachia pipientis subsp. Culex pipiens (strain wPip), this protein is Formamidopyrimidine-DNA glycosylase.